A 117-amino-acid chain; its full sequence is Large ribosomal subunit protein bL20 (117 aa).

The protein belongs to the bacterial ribosomal protein bL20 family.

Its function is as follows. Binds directly to 23S ribosomal RNA and is necessary for the in vitro assembly process of the 50S ribosomal subunit. It is not involved in the protein synthesizing functions of that subunit. The sequence is that of Large ribosomal subunit protein bL20 from Gloeothece citriformis (strain PCC 7424) (Cyanothece sp. (strain PCC 7424)).